An 844-amino-acid chain; its full sequence is Beta-mannosidase B (844 aa).

The active-site Proton donor is the Glu432. Asn723 is a glycosylation site (N-linked (GlcNAc...) asparagine).

The protein belongs to the glycosyl hydrolase 2 family. Beta-mannosidase B subfamily.

It catalyses the reaction Hydrolysis of terminal, non-reducing beta-D-mannose residues in beta-D-mannosides.. It participates in glycan metabolism; N-glycan degradation. Its function is as follows. Exoglycosidase that cleaves the single beta-linked mannose residue from the non-reducing end of beta-mannosidic oligosaccharides of various complexity and length. Prefers mannobiose over mannotriose and has no activity against polymeric mannan. Is also severely restricted by galactosyl substitutions at the +1 subsite. This is Beta-mannosidase B (mndB) from Aspergillus flavus (strain ATCC 200026 / FGSC A1120 / IAM 13836 / NRRL 3357 / JCM 12722 / SRRC 167).